Reading from the N-terminus, the 489-residue chain is N-succinylglutamate 5-semialdehyde dehydrogenase (489 aa).

NAD(+) is bound at residue 223-228; sequence GSASTG. Catalysis depends on residues Glu246 and Cys280.

It belongs to the aldehyde dehydrogenase family. AstD subfamily.

The catalysed reaction is N-succinyl-L-glutamate 5-semialdehyde + NAD(+) + H2O = N-succinyl-L-glutamate + NADH + 2 H(+). The protein operates within amino-acid degradation; L-arginine degradation via AST pathway; L-glutamate and succinate from L-arginine: step 4/5. Catalyzes the NAD-dependent reduction of succinylglutamate semialdehyde into succinylglutamate. This Acinetobacter baylyi (strain ATCC 33305 / BD413 / ADP1) protein is N-succinylglutamate 5-semialdehyde dehydrogenase.